A 335-amino-acid chain; its full sequence is 2-acylglycerol O-acyltransferase 1 (335 aa).

2 consecutive transmembrane segments (helical) span residues 24–44 (WVFSFLLLAQCCIGIFLSLVL) and 47–67 (LWLILALYVLWLYLDWETPQA). 3 N-linked (GlcNAc...) asparagine glycosylation sites follow: asparagine 77, asparagine 125, and asparagine 180.

It belongs to the diacylglycerol acyltransferase family.

It is found in the endoplasmic reticulum membrane. The catalysed reaction is a 2-acylglycerol + an acyl-CoA = a 1,2-diacylglycerol + CoA. It carries out the reaction a 2-acylglycerol + an acyl-CoA = a 1,2-diacyl-sn-glycerol + CoA. It catalyses the reaction a 2-acylglycerol + an acyl-CoA = a 2,3-diacyl-sn-glycerol + CoA. The enzyme catalyses a 1-acylglycerol + an acyl-CoA = a 1,2-diacylglycerol + CoA. The catalysed reaction is a 1-acylglycerol + an acyl-CoA = a 1,3-diacylglycerol + CoA. It carries out the reaction a 1-acyl-sn-glycerol + an acyl-CoA = a 1,3-diacyl-sn-glycerol + CoA. It catalyses the reaction a 3-acyl-sn-glycerol + an acyl-CoA = a 1,3-diacyl-sn-glycerol + CoA. The protein operates within glycerolipid metabolism; triacylglycerol biosynthesis. Its function is as follows. Involved in glycerolipid synthesis and lipid metabolism. Catalyzes the formation of diacylglycerol, the precursor of triacylglycerol, by transferring the acyl chain of a fatty acyl-CoA to a monoacylglycerol, mainly at the sn-1 or sn-3 positions. It uses both sn-2-monoacylglycerol (2-acylglycerol) and sn-1-monoacylglycerol (1-acyl-sn-glycerol) equally well as substrates, and uses sn-3-monoacylglycerol (3-acyl-sn-glycerol) with lower efficiency. The sequence is that of 2-acylglycerol O-acyltransferase 1 (mogat1) from Xenopus tropicalis (Western clawed frog).